The chain runs to 365 residues: 5-hydroxytryptamine receptor 1E (365 aa).

The Extracellular segment spans residues 1 to 22; the sequence is MNITNCTTDASMVVRPKTVTEK. Asn2 and Asn5 each carry an N-linked (GlcNAc...) asparagine glycan. A helical membrane pass occupies residues 23 to 47; the sequence is MLICMTLVIITTLTMLLNSAVIMAI. The Cytoplasmic portion of the chain corresponds to 48-59; it reads CTTKKLHQPANY. The chain crosses the membrane as a helical span at residues 60 to 82; that stretch reads LICSLAVTDLLVAVLVMPLSIMY. Over 83 to 96 the chain is Extracellular; it reads IVMDSWRLGYFICE. An intrachain disulfide couples Cys95 to Cys173. A helical transmembrane segment spans residues 97-118; that stretch reads VWLSVDMTCCTCSILHLCVIAL. Residues Asp102 and Thr107 each contribute to the ergotamine site. Residues 119–121 carry the DRY motif; important for ligand-induced conformation changes motif; sequence DRY. Topologically, residues 119–138 are cytoplasmic; it reads DRYWAITNAIEYARKRTAKR. A helical transmembrane segment spans residues 139–160; the sequence is AGLMILTVWTISIFISMPPLFW. Over 161–179 the chain is Extracellular; it reads RSHRQLSPPPSQCTIQHDH. An ergotamine-binding site is contributed by Ile175. Residues 180 to 202 traverse the membrane as a helical segment; the sequence is VIYTIYSTFGAFYIPLTLILILY. The Cytoplasmic portion of the chain corresponds to 203-291; the sequence is YRIYHAAKSL…SSTRERKAAR (89 aa). A helical transmembrane segment spans residues 292-314; sequence ILGLILGAFILSWLPFFIKELIV. The Extracellular segment spans residues 315–324; sequence GLSIYTVSSE. A helical transmembrane segment spans residues 325-347; it reads VGDFLTWLGYVNSLINPLLYTSF. Positions 340 to 344 match the NPxxY motif; important for ligand-induced conformation changes and signaling motif; sequence NPLLY. The Cytoplasmic portion of the chain corresponds to 348 to 365; it reads NEDFKLAFKKLIRCREHT.

This sequence belongs to the G-protein coupled receptor 1 family. As to expression, detected in the brain with the greatest abundance in the hippocampus, followed by the olfactory bulb. Lower levels are detected in the cortex, thalamus, pons, hypothalamus, midbrain, striatum, and cerebellum.

Its subcellular location is the cell membrane. G-protein coupled receptor for 5-hydroxytryptamine (serotonin). Also functions as a receptor for various alkaloids and psychoactive substances. Ligand binding causes a conformation change that triggers signaling via guanine nucleotide-binding proteins (G proteins) and modulates the activity of down-stream effectors, such as adenylate cyclase. Signaling inhibits adenylate cyclase activity. In Cavia porcellus (Guinea pig), this protein is 5-hydroxytryptamine receptor 1E (5HT1E).